The following is a 525-amino-acid chain: G patch domain-containing protein 3 (525 aa).

Disordered regions lie at residues 54-85 (ERGP…PASD) and 246-317 (EQEE…QERT). The segment covering 274 to 299 (DEPEDEGQQQEEEEESGSEEDDDRGE) has biased composition (acidic residues). Residues 300–317 (EWERHEALHEDVTGQERT) show a composition bias toward basic and acidic residues. In terms of domain architecture, G-patch spans 411-459 (TKGIGRKVMERQGWAEGQGLGSRCSGVPEALDGDGQHPRCKRGLGYHGE).

In terms of assembly, interacts with mitochondrial MAVS; the interaction is markedly increased upon viral infection.

Its subcellular location is the nucleus. The protein resides in the cytoplasm. Functionally, involved in transcriptional regulation. It is able to activate transcription from CXCR4 promoter and therefore it might control neural crest cell migration involved in ocular and craniofacial development. Is a negative regulator of immune antiviral response, acting via down-regulation of RIG-I-like receptors signaling and inhibition of type I interferon production. The control mechanism involves interaction with mitochondrial MAVS and inhibition of MAVS assembly with downstream proteins implicated in antiviral response, such as TBK1 and TRAF6. In Mus musculus (Mouse), this protein is G patch domain-containing protein 3 (Gpatch3).